Consider the following 284-residue polypeptide: Para-Rep C3 (284 aa).

Positions 3–98 (TVQSTCWVFT…IEGPWEYGKY (96 aa)) constitute a CRESS-DNA virus Rep endonuclease domain. The RCR-1 motif lies at 10–13 (VFTL). A divalent metal cation-binding residues include E36 and H42. The RCR-2 motif lies at 42 to 44 (HLQ). The Nuclear localization signal motif lies at 51 to 71 (AQQSLGQMKAIIPGAHFEKMR). Y81 (for DNA cleavage activity) is an active-site residue. The RCR-3 motif lies at 81-84 (YAMK). D86 is an a divalent metal cation binding site. Positions 98–104 (YIKKGSH) match the Nuclear localization signal motif. Residue 174 to 182 (GPKGGEGKS) participates in ATP binding.

Belongs to the nanoviridea/circoviridae replication-associated protein family. As to quaternary structure, homooligomer (Potential). Rep binds to repeated DNA motifs (iterons). Mg(2+) serves as cofactor. The cofactor is Mn(2+).

It localises to the host nucleus. The enzyme catalyses ATP + H2O = ADP + phosphate + H(+). Functionally, initiates and terminates the replication only of its own subviral DNA molecule. The closed circular ssDNA genome is first converted to a superhelical dsDNA. Rep binds a specific hairpin at the genome origin of replication. Introduces an endonucleolytic nick within the intergenic region of the genome, thereby initiating the rolling circle replication (RCR). Following cleavage, binds covalently to the 5'-phosphate of DNA as a tyrosyl ester. The cleavage gives rise to a free 3'-OH that serves as a primer for the cellular DNA polymerase. The polymerase synthesizes the (+) strand DNA by rolling circle mechanism. After one round of replication, a Rep-catalyzed nucleotidyl transfer reaction releases a circular single-stranded virus genome, thereby terminating the replication. Displays origin-specific DNA cleavage, nucleotidyl transferase, ATPase and helicase activities. The chain is Para-Rep C3 (C3) from Milk vetch dwarf C3 alphasatellite (MVDC3A).